Reading from the N-terminus, the 442-residue chain is Proline--tRNA ligase (442 aa).

It belongs to the class-II aminoacyl-tRNA synthetase family. ProS type 2 subfamily. In terms of assembly, homodimer.

It is found in the cytoplasm. The enzyme catalyses tRNA(Pro) + L-proline + ATP = L-prolyl-tRNA(Pro) + AMP + diphosphate. Its function is as follows. Catalyzes the attachment of proline to tRNA(Pro) in a two-step reaction: proline is first activated by ATP to form Pro-AMP and then transferred to the acceptor end of tRNA(Pro). The protein is Proline--tRNA ligase of Brucella ovis (strain ATCC 25840 / 63/290 / NCTC 10512).